A 347-amino-acid chain; its full sequence is Ultraviolet-sensitive opsin (347 aa).

The Extracellular segment spans residues 1–37; it reads MSGEEEFYLFKNGSIGGPWDGPQYHIAPPWAFYLQTA. N-linked (GlcNAc...) asparagine glycosylation is present at N12. A helical membrane pass occupies residues 38 to 58; the sequence is FMGFVFMVGTPLNAIVLVVTI. The Cytoplasmic segment spans residues 59–69; sequence KYKKLRQPLNY. The helical transmembrane segment at 70–90 threads the bilayer; that stretch reads ILVNISFCGFLACIICIFTVF. The Extracellular segment spans residues 91–106; the sequence is VSSSQGYFVFGKHVCA. A disulfide bridge connects residues C105 and C182. Residues 107-127 traverse the membrane as a helical segment; it reads FEGFMGATAGLVTGWSLAFLA. Residues 128–147 are Cytoplasmic-facing; the sequence is FERYIVICKPLGNFRFTAKH. Residues 148–168 traverse the membrane as a helical segment; that stretch reads ALVVVVATWVIGIGVAIPPFF. Residues 169–197 are Extracellular-facing; that stretch reads GWSRYVPEGLQCSCGPDWYTVGTKYRSEY. Residues 198–218 traverse the membrane as a helical segment; sequence YTWFLFIFCFIVPLSLIIFSY. Residues 219 to 247 lie on the Cytoplasmic side of the membrane; that stretch reads SQLLSALRAVAAQQQESATTQKAEREVSR. The chain crosses the membrane as a helical span at residues 248 to 268; the sequence is MVVVMVGSFCVCYVPYAALAM. Residues 269–282 lie on the Extracellular side of the membrane; it reads YMVNNREHGIDLRL. Residues 283 to 303 form a helical membrane-spanning segment; the sequence is VTIPAFFSKSSCVYNPIIYCF. Residue K291 is modified to N6-(retinylidene)lysine. The Cytoplasmic segment spans residues 304 to 347; that stretch reads MNKQFRGCIMEMVCGKPMTDDSDMSSSAQRTEVSSVSSSQVSPS. C317 is lipidated: S-palmitoyl cysteine. Residues 324 to 347 are disordered; it reads DSDMSSSAQRTEVSSVSSSQVSPS. The segment covering 328 to 347 has biased composition (low complexity); the sequence is SSSAQRTEVSSVSSSQVSPS.

It belongs to the G-protein coupled receptor 1 family. Opsin subfamily. Post-translationally, phosphorylated on some or all of the serine and threonine residues present in the C-terminal region. Cone photoreceptor cells.

The protein localises to the membrane. Functionally, visual pigments are the light-absorbing molecules that mediate vision. They consist of an apoprotein, opsin, covalently linked to cis-retinal. This Melopsittacus undulatus (Budgerigar) protein is Ultraviolet-sensitive opsin.